We begin with the raw amino-acid sequence, 138 residues long: Basic phospholipase A2 RV-4 (138 aa).

Positions 1 to 16 (MRTLWIVAVCLIGVEG) are cleaved as a signal peptide. Cystine bridges form between Cys42–Cys131, Cys44–Cys60, Cys59–Cys111, Cys65–Cys138, Cys66–Cys104, Cys73–Cys97, and Cys91–Cys102. Positions 43, 45, and 47 each coordinate Ca(2+). Residue His63 is part of the active site. Asp64 is a Ca(2+) binding site. Asp105 is an active-site residue.

This sequence belongs to the phospholipase A2 family. Group II subfamily. D49 sub-subfamily. Heterodimer of a weakly toxic basic protein having phospholipase A2 activity (RV-4) and a non-toxic acidic protein which inhibits its enzymatic activity but potentiates its lethal potency and neurotoxicity (RV-7). Ca(2+) is required as a cofactor. Expressed by the venom gland.

It is found in the secreted. The enzyme catalyses a 1,2-diacyl-sn-glycero-3-phosphocholine + H2O = a 1-acyl-sn-glycero-3-phosphocholine + a fatty acid + H(+). Functionally, heterodimer RV-4/RV-7: acts as a presynaptic neurotoxin. Its function is as follows. Monomer: snake venom phospholipase A2 (PLA2) that acts as a presynaptic neurotoxin. PLA2 catalyzes the calcium-dependent hydrolysis of the 2-acyl groups in 3-sn-phosphoglycerides. This Daboia siamensis (Eastern Russel's viper) protein is Basic phospholipase A2 RV-4.